The following is a 156-amino-acid chain: Small ribosomal subunit protein uS7 (156 aa).

This sequence belongs to the universal ribosomal protein uS7 family. In terms of assembly, part of the 30S ribosomal subunit. Contacts proteins S9 and S11.

Its function is as follows. One of the primary rRNA binding proteins, it binds directly to 16S rRNA where it nucleates assembly of the head domain of the 30S subunit. Is located at the subunit interface close to the decoding center, probably blocks exit of the E-site tRNA. The sequence is that of Small ribosomal subunit protein uS7 from Shigella dysenteriae serotype 1 (strain Sd197).